Here is a 290-residue protein sequence, read N- to C-terminus: Porphobilinogen deaminase (290 aa).

At C237 the chain carries S-(dipyrrolylmethanemethyl)cysteine.

Belongs to the HMBS family. Monomer. It depends on dipyrromethane as a cofactor.

The enzyme catalyses 4 porphobilinogen + H2O = hydroxymethylbilane + 4 NH4(+). It participates in porphyrin-containing compound metabolism; protoporphyrin-IX biosynthesis; coproporphyrinogen-III from 5-aminolevulinate: step 2/4. Its function is as follows. Tetrapolymerization of the monopyrrole PBG into the hydroxymethylbilane pre-uroporphyrinogen in several discrete steps. This Clostridium botulinum (strain 657 / Type Ba4) protein is Porphobilinogen deaminase.